A 262-amino-acid chain; its full sequence is Protein BREAKING OF ASYMMETRY IN THE STOMATAL LINEAGE (262 aa).

Disordered stretches follow at residues 32–107 (DEDG…QPPV) and 129–222 (KEGK…GRGS). The segment covering 37-47 (NNNGNTTNNNN) has biased composition (low complexity). 2 consecutive short sequence motifs (nuclear localization signal) follow at residues 50 to 57 (FKRIKRKI) and 61 to 68 (KKKRSERK). The span at 51-66 (KRIKRKIKSTKKKRSE) shows a compositional bias: basic residues. Phosphoserine; by ASK7 is present on residues S72, S85, S86, and S87. The segment covering 84-95 (RSSSVSPTTSGS) has biased composition (low complexity). S89 is modified (phosphoserine; by ASK7 and MPK6). T91 carries the post-translational modification Phosphothreonine; by ASK7. The segment covering 129 to 146 (KEGKQEKKETESSSEKSP) has biased composition (basic and acidic residues). Phosphoserine; by MPK6 is present on residues S145 and S168. Over residues 179–189 (NDNTSCQGTKD) the composition is skewed to polar residues. A compositionally biased stretch (basic and acidic residues) spans 190–200 (VSSDVTERTKE). The tract at residues 222–262 (SFAFPILGVEWMGSPAKMPESDDLSPKKQKPVALGFQCCRF) is required for polarization at the cell cortex. A FxFP, required for cortical polarity formation motif is present at residues 223–226 (FAFP). Phosphoserine; by MPK6 occurs at positions 235 and 246.

As to quaternary structure, component of a complex made of POLAR, BASL, ASK7/BIN2 and ASK3/SK12. Interacts with POLAR, ASK7/BIN2 and ASK3/SK12. Binds to YDA when phosphorylated. Interacts with MPK6, MPK3 and MKK5. Post-translationally, cortical localization of BASL requires phosphorylation mediated by MPK3 and MPK6. Phosphorylation promotes YDA binding. Phosphorylation status modulates subcellular mobility. In terms of tissue distribution, mostly expressed in stomatal lineage cells including asymmetrically dividing meristemoid mother cells (MMCs) and meristemoids, and, at lower levels, in their sisters. Also present in vasculature. Expressed at low levels in the epidermal pavement cells.

It is found in the cytoplasm. Its subcellular location is the nucleus. It localises to the cell cortex. The protein localises to the cell membrane. Regulates asymmetric cell division (ACD), especially in stomatal-lineage cells, probably by modulating accumulation and subcellular polarization of POLAR and SPCH. Mediates an attenuation of MAPK signaling upon polarization of POLAR and ASK7/BIN2 in stomatal lineage ground cells (SLGCs) undergoing ACD, and relieves BIN2 inhibition of SPCH in the nucleus. When phosphorylated, functions as a scaffold and recruits the MAPKKK YODA, MPK3 and MPK6 to spatially reorganize the MAPK signaling pathway at the cortex of cells undergoing ACD. Cortical polarization leads to elevated nuclear MPK6 signaling and lowered SPCH abundance in one of the two daughter cells, thus differentiating the two daughter cells after ACD. This Arabidopsis thaliana (Mouse-ear cress) protein is Protein BREAKING OF ASYMMETRY IN THE STOMATAL LINEAGE.